The sequence spans 974 residues: Leucine-rich repeat receptor-like kinase protein SUNN (974 aa).

The N-terminal stretch at 1–20 (MKNITCYLLLLCMLFTTCYS) is a signal peptide. 4 N-linked (GlcNAc...) asparagine glycosylation sites follow: Asn75, Asn104, Asn123, and Asn136. LRR repeat units lie at residues 92 to 116 (LNMLESLTITMDNLTGELPTELSKL), 117 to 141 (TSLRILNISHNLFSGNFPGNITFGM), 143 to 165 (KLEALDAYDNNFEGPLPEEIVSL), 166 to 188 (MKLKYLSFAGNFFSGTIPESYSE), 189 to 213 (FQKLEILRLNYNSLTGKIPKSLSKL), 238 to 262 (IKSLRYLEISNANLTGEIPPSLGNL), 263 to 286 (ENLDSLFLQMNNLTGTIPPELSSM), 288 to 309 (SLMSLDLSINGLSGEIPETFSK), 310 to 334 (LKNLTLINFFQNKLRGSIPAFIGDL), 335 to 358 (PNLETLQVWENNFSFVLPQNLGSN), 360 to 382 (KFIYFDVTKNHLTGLIPPELCKS), 383 to 406 (KKLKTFIVTDNFFRGPIPNGIGPC), 407 to 430 (KSLEKIRVANNYLDGPVPPGIFQL), 431 to 454 (PSVQIIELGNNRFNGQLPTEISGN), 456 to 477 (LGNLALSNNLFTGRIPASMKNL), 478 to 501 (RSLQTLLLDANQFLGEIPAEVFAL), 503 to 525 (VLTRINISGNNLTGGIPKTVTQC), 527 to 549 (SLTAVDFSRNMLTGEVPKGMKNL), 550 to 573 (KVLSIFNVSHNSISGKIPDEIRFM), and 574 to 598 (TSLTTLDLSYNNFTGIVPTGGQFLV). 2 N-linked (GlcNAc...) asparagine glycosylation sites follow: Asn250 and Asn274. Residues Asn312 and Asn346 are each glycosylated (N-linked (GlcNAc...) asparagine). Asn508 and Asn513 each carry an N-linked (GlcNAc...) asparagine glycan. Asn556 and Asn585 each carry an N-linked (GlcNAc...) asparagine glycan. A helical membrane pass occupies residues 635 to 655 (VVIAIVFATAVLMVIVTLHMM). The region spanning 685 to 972 (LKEENIIGKG…PPHSTSHNLI (288 aa)) is the Protein kinase domain. Residues 691 to 699 (IGKGGAGIV) and Lys713 contribute to the ATP site. Asp810 acts as the Proton acceptor in catalysis.

It belongs to the protein kinase superfamily. Ser/Thr protein kinase family. In terms of tissue distribution, expressed in roots and shoots. Expressed in the vasculature of leaves, petioles, stems and roots.

It is found in the cell membrane. The catalysed reaction is L-seryl-[protein] + ATP = O-phospho-L-seryl-[protein] + ADP + H(+). The enzyme catalyses L-threonyl-[protein] + ATP = O-phospho-L-threonyl-[protein] + ADP + H(+). Functionally, LRR receptor kinase involved in the regulation of root growth and root nodule organogenesis. Involved in long distance nodulation signaling events. Involved in the autoregulation of nodulation (AON), a long distance systemic signaling from root to shoot and back again, which allows legumes to limit the number of root nodules formed based on available nitrogen and previous rhizobial colonization. Acts from shoot to root to control AON. Interacts with CLE12 and CLE13 signaling to control nodule numbers. Required for the modulation of shoot-to-root auxin transport in response to altered nitrogen tissue concentrations and in the absence of rhizobia. Shoot-to-root auxin transport influences lateral root density and length. Involved in the regulation of root colonization by arbuscular mycorrhizal (AM) fungi. Interacts with CLE33 and CL53 signaling to repress strigolactone biosynthetic genes and strigolactone content in the roots, and consequently reduces the promotion of further colonization by AM fungi. This Medicago truncatula (Barrel medic) protein is Leucine-rich repeat receptor-like kinase protein SUNN.